We begin with the raw amino-acid sequence, 423 residues long: MAKIVVTGGAALHGEVSISGAKNAVLPILCATLLADEPVEITNVPHLHDVVTTVKLLGELGAKVTIDQGTLSRGSAIVVDPRSVNQHVAPYELVKTMRASILVLGPLLARFGAAEVSLPGGCAIGSRPVDQHIKGLQALGAEIVVENGFIKATAKRLKGGHFTFDMVSVTGTENVLMGAVLAEGTTILDNCAMEPEVTDLAHCLIALGAKIEGLGTARLVIEGVERLSGGRHEVLPDRIETGTFLVAAAMTGGKVTVNRARPNTMDAVLSKLVEAGAKIETTDDTITLDMQGKRPKAVNLTTAPYPAFPTDMQAQFMALNCVADGVGVINETIFENRFMHVNELLRLGADIQVEGHTAIVRGNEHLSGAPVMATDLRASASLILAGLMASGETTIDRIYHLDRGYENIEEKLSSLGATIRRVP.

22 to 23 (KN) is a phosphoenolpyruvate binding site. Arg98 contributes to the UDP-N-acetyl-alpha-D-glucosamine binding site. Cys122 serves as the catalytic Proton donor. Residue Cys122 is modified to 2-(S-cysteinyl)pyruvic acid O-phosphothioketal. Residues 127 to 131 (RPVDQ), Asp311, and Ile333 contribute to the UDP-N-acetyl-alpha-D-glucosamine site.

The protein belongs to the EPSP synthase family. MurA subfamily.

The protein resides in the cytoplasm. The enzyme catalyses phosphoenolpyruvate + UDP-N-acetyl-alpha-D-glucosamine = UDP-N-acetyl-3-O-(1-carboxyvinyl)-alpha-D-glucosamine + phosphate. It participates in cell wall biogenesis; peptidoglycan biosynthesis. Functionally, cell wall formation. Adds enolpyruvyl to UDP-N-acetylglucosamine. The protein is UDP-N-acetylglucosamine 1-carboxyvinyltransferase of Stenotrophomonas maltophilia (strain R551-3).